The primary structure comprises 2196 residues: Genome polyprotein (2196 aa).

Residue G2 is the site of N-myristoyl glycine; by host attachment. At 2-1506 (GAQVSTQKTG…HVSRAFICLQ (1505 aa)) the chain is on the cytoplasmic side. The amphipathic alpha-helix stretch occupies residues 568 to 584 (DLQGDSEHAVESAVSRV). Residues H883 and D901 each act as for protease 2A activity in the active site. C918 and C920 together coordinate Zn(2+). Catalysis depends on C972, which acts as the For protease 2A activity. Zn(2+)-binding residues include C978 and H980. A membrane-binding region spans residues 1112 to 1184 (NNGWLKKFTE…EQSAPSQSDQ (73 aa)). Residues 1112–1250 (NNGWLKKFTE…SPGAGKSVAT (139 aa)) form an oligomerization region. The segment at 1133–1137 (AIKIQ) is RNA-binding. Residues 1216 to 1372 (EKKMSNYIQF…SMYSQNGKIN (157 aa)) form the SF3 helicase domain. Zn(2+) contacts are provided by C1380, C1392, and C1397. The C4-type; degenerate zinc-finger motif lies at 1380–1397 (CDEECCPVNFKKCCPLVC). The RNA-binding stretch occupies residues 1424-1431 (EYNHRHSV). The tract at residues 1435–1440 (LEALFQ) is oligomerization. An intramembrane segment occupies 1507–1522 (ALTTFVSVAGIIYIIY). Over 1523–2196 (KLFAGFQGAY…TLRRKWLDSF (674 aa)) the chain is Cytoplasmic. Residue Y1532 is modified to O-(5'-phospho-RNA)-tyrosine. A Peptidase C3 domain is found at 1552 to 1730 (GPAFEFAVAM…FSAALLKHYF (179 aa)). Catalysis depends on for protease 3C activity residues H1591, E1622, and C1698. One can recognise a RdRp catalytic domain in the interval 1961–2077 (GHLIAFDYSG…SYPWPIDASL (117 aa)). Residues D1967 and D2063 each contribute to the Mg(2+) site.

Belongs to the picornaviruses polyprotein family. In terms of assembly, interacts with capsid protein VP1 and capsid protein VP3 to form heterotrimeric protomers. As to quaternary structure, interacts with capsid protein VP0, and capsid protein VP3 to form heterotrimeric protomers. Five protomers subsequently associate to form pentamers which serve as building blocks for the capsid. Interacts with capsid protein VP2, capsid protein VP3 and capsid protein VP4 following cleavage of capsid protein VP0. Interacts with capsid protein VP1 and capsid protein VP3 in the mature capsid. In terms of assembly, interacts with capsid protein VP0 and capsid protein VP1 to form heterotrimeric protomers. Five protomers subsequently associate to form pentamers which serve as building blocks for the capsid. Interacts with capsid protein VP4 in the mature capsid. Interacts with protein 2C; this interaction may be important for virion morphogenesis. As to quaternary structure, interacts with capsid protein VP1 and capsid protein VP3. Homodimer. In terms of assembly, homohexamer; forms a hexameric ring structure with 6-fold symmetry characteristic of AAA+ ATPases. Interacts (via N-terminus) with host RTN3 (via reticulon domain); this interaction is important for viral replication. Interacts with capsid protein VP3; this interaction may be important for virion morphogenesis. As to quaternary structure, interacts with protein 3CD. Homodimer. Interacts with host GBF1. Interacts (via GOLD domain) with host ACBD3 (via GOLD domain); this interaction allows the formation of a viral protein 3A/ACBD3 heterotetramer with a 2:2 stoichiometry, which will stimulate the recruitment of host PI4KB in order to synthesize PI4P at the viral RNA replication sites. In terms of assembly, interacts with RNA-directed RNA polymerase. As to quaternary structure, interacts with protein 3AB and with RNA-directed RNA polymerase. Interacts with Viral protein genome-linked and with protein 3CD. Mg(2+) is required as a cofactor. Specific enzymatic cleavages in vivo by the viral proteases yield processing intermediates and the mature proteins. In terms of processing, myristoylation is required for the formation of pentamers during virus assembly. Further assembly of 12 pentamers and a molecule of genomic RNA generates the provirion. Post-translationally, during virion maturation, immature virions are rendered infectious following cleavage of VP0 into VP4 and VP2. This maturation seems to be an autocatalytic event triggered by the presence of RNA in the capsid and it is followed by a conformational change infectious virion. Myristoylation is required during RNA encapsidation and formation of the mature virus particle. In terms of processing, VPg is uridylylated by the polymerase into VPg-pUpU. This acts as a nucleotide-peptide primer for the genomic RNA replication.

Its subcellular location is the virion. It localises to the host cytoplasm. The protein resides in the host cytoplasmic vesicle membrane. The protein localises to the host nucleus. It carries out the reaction a ribonucleoside 5'-triphosphate + H2O = a ribonucleoside 5'-diphosphate + phosphate + H(+). The catalysed reaction is Selective cleavage of Tyr-|-Gly bond in the picornavirus polyprotein.. The enzyme catalyses RNA(n) + a ribonucleoside 5'-triphosphate = RNA(n+1) + diphosphate. It catalyses the reaction Selective cleavage of Gln-|-Gly bond in the poliovirus polyprotein. In other picornavirus reactions Glu may be substituted for Gln, and Ser or Thr for Gly.. Replication or transcription is subject to high level of random mutations by the nucleotide analog ribavirin. In terms of biological role, forms an icosahedral capsid of pseudo T=3 symmetry with capsid proteins VP2 and VP3. The capsid is 300 Angstroms in diameter, composed of 60 copies of each capsid protein and enclosing the viral positive strand RNA genome. Capsid protein VP1 mainly forms the vertices of the capsid. Capsid protein VP1 interacts with host cell receptor to provide virion attachment to target host cells. This attachment induces virion internalization. Tyrosine kinases are probably involved in the entry process. After binding to its receptor, the capsid undergoes conformational changes. Capsid protein VP1 N-terminus (that contains an amphipathic alpha-helix) and capsid protein VP4 are externalized. Together, they shape a pore in the host membrane through which viral genome is translocated to host cell cytoplasm. Functionally, forms an icosahedral capsid of pseudo T=3 symmetry with capsid proteins VP2 and VP3. The capsid is 300 Angstroms in diameter, composed of 60 copies of each capsid protein and enclosing the viral positive strand RNA genome. Its function is as follows. Lies on the inner surface of the capsid shell. After binding to the host receptor, the capsid undergoes conformational changes. Capsid protein VP4 is released, Capsid protein VP1 N-terminus is externalized, and together, they shape a pore in the host membrane through which the viral genome is translocated into the host cell cytoplasm. Component of immature procapsids, which is cleaved into capsid proteins VP4 and VP2 after maturation. Allows the capsid to remain inactive before the maturation step. In terms of biological role, cysteine protease that cleaves viral polyprotein and specific host proteins. It is responsible for the autocatalytic cleavage between the P1 and P2 regions, which is the first cleavage occurring in the polyprotein. Also cleaves the host translation initiation factor EIF4G1, in order to shut down the capped cellular mRNA translation. Inhibits the host nucleus-cytoplasm protein and RNA trafficking by cleaving host members of the nuclear pores. Counteracts stress granule formation probably by antagonizing its assembly or promoting its dissassembly. Functionally, plays an essential role in the virus replication cycle by acting as a viroporin. Creates a pore in the host endoplasmic reticulum and as a consequence releases Ca2+ in the cytoplasm of infected cell. In turn, high levels of cytoplasmic calcium may trigger membrane trafficking and transport of viral ER-associated proteins to viroplasms, sites of viral genome replication. Its function is as follows. Induces and associates with structural rearrangements of intracellular membranes. Displays RNA-binding, nucleotide binding and NTPase activities. May play a role in virion morphogenesis and viral RNA encapsidation by interacting with the capsid protein VP3. Localizes the viral replication complex to the surface of membranous vesicles. Together with protein 3CD binds the Cis-Active RNA Element (CRE) which is involved in RNA synthesis initiation. Acts as a cofactor to stimulate the activity of 3D polymerase, maybe through a nucleid acid chaperone activity. In terms of biological role, localizes the viral replication complex to the surface of membranous vesicles. It inhibits host cell endoplasmic reticulum-to-Golgi apparatus transport and causes the disassembly of the Golgi complex, possibly through GBF1 interaction. This would result in depletion of MHC, trail receptors and IFN receptors at the host cell surface. Plays an essential role in viral RNA replication by recruiting ACBD3 and PI4KB at the viral replication sites, thereby allowing the formation of the rearranged membranous structures where viral replication takes place. Functionally, acts as a primer for viral RNA replication and remains covalently bound to viral genomic RNA. VPg is uridylylated prior to priming replication into VPg-pUpU. The oriI viral genomic sequence may act as a template for this. The VPg-pUpU is then used as primer on the genomic RNA poly(A) by the RNA-dependent RNA polymerase to replicate the viral genome. During genome replication, the VPg-RNA linkage is removed by the host TDP2, thereby accelerating replication. During the late stage of the replication cycle, host TDP2 is excluded from sites of viral RNA synthesis and encapsidation, allowing for the generation of progeny virions. Its function is as follows. Involved in the viral replication complex and viral polypeptide maturation. It exhibits protease activity with a specificity and catalytic efficiency that is different from protease 3C. Protein 3CD lacks polymerase activity. Protein 3CD binds to the 5'UTR of the viral genome. Replicates the viral genomic RNA on the surface of intracellular membranes. May form linear arrays of subunits that propagate along a strong head-to-tail interaction called interface-I. Covalently attaches UMP to a tyrosine of VPg, which is used to prime RNA synthesis. The positive stranded RNA genome is first replicated at virus induced membranous vesicles, creating a dsRNA genomic replication form. This dsRNA is then used as template to synthesize positive stranded RNA genomes. ss(+)RNA genomes are either translated, replicated or encapsidated. In terms of biological role, major viral protease that mediates proteolytic processing of the polyprotein. Cleaves host EIF5B, contributing to host translation shutoff. Also cleaves host PABPC1, contributing to host translation shutoff. Cleaves host NLRP1, triggers host N-glycine-mediated degradation of the autoinhibitory NLRP1 N-terminal fragment. The protein is Genome polyprotein of Homo sapiens (Human).